Here is an 88-residue protein sequence, read N- to C-terminus: Elongation factor 1-beta (88 aa).

Belongs to the EF-1-beta/EF-1-delta family.

In terms of biological role, promotes the exchange of GDP for GTP in EF-1-alpha/GDP, thus allowing the regeneration of EF-1-alpha/GTP that could then be used to form the ternary complex EF-1-alpha/GTP/AAtRNA. In Thermoplasma volcanium (strain ATCC 51530 / DSM 4299 / JCM 9571 / NBRC 15438 / GSS1), this protein is Elongation factor 1-beta (ef1b).